Reading from the N-terminus, the 1035-residue chain is DNA polymerase catalytic subunit (1035 aa).

Belongs to the DNA polymerase type-B family.

The protein localises to the host nucleus. It catalyses the reaction DNA(n) + a 2'-deoxyribonucleoside 5'-triphosphate = DNA(n+1) + diphosphate. The polypeptide is DNA polymerase catalytic subunit (UL54) (Macaca mulatta (Rhesus macaque)).